Consider the following 117-residue polypeptide: Non-specific lipid-transfer protein 3 (117 aa).

The first 25 residues, 1–25, serve as a signal peptide directing secretion; that stretch reads MAGLVKLSCLVLACMIVAGPIATNA. Disulfide bonds link cysteine 29–cysteine 76, cysteine 39–cysteine 53, cysteine 54–cysteine 99, and cysteine 74–cysteine 113.

This sequence belongs to the plant LTP family.

Plant non-specific lipid-transfer proteins transfer phospholipids as well as galactolipids across membranes. May play a role in wax or cutin deposition in the cell walls of expanding epidermal cells and certain secretory tissues. The protein is Non-specific lipid-transfer protein 3 (LTP3) of Brassica napus (Rape).